A 316-amino-acid polypeptide reads, in one-letter code: Probable cell division protein WhiA (316 aa).

The H-T-H motif DNA-binding region spans 275-309 (TLKELGEMVESGKISKSGINHRLRKLDQIAEQLRN).

This sequence belongs to the WhiA family.

Involved in cell division and chromosome segregation. In Bacillus pumilus (strain SAFR-032), this protein is Probable cell division protein WhiA.